The primary structure comprises 221 residues: Probable GTP-binding protein EngB (221 aa).

The 189-residue stretch at 23–211 (PLREVAFAGR…DNLIIKWLFE (189 aa)) folds into the EngB-type G domain. Residues S38 and T60 each contribute to the Mg(2+) site.

Belongs to the TRAFAC class TrmE-Era-EngA-EngB-Septin-like GTPase superfamily. EngB GTPase family. It depends on Mg(2+) as a cofactor.

Its function is as follows. Necessary for normal cell division and for the maintenance of normal septation. This is Probable GTP-binding protein EngB from Polynucleobacter asymbioticus (strain DSM 18221 / CIP 109841 / QLW-P1DMWA-1) (Polynucleobacter necessarius subsp. asymbioticus).